A 764-amino-acid polypeptide reads, in one-letter code: Phosphoribosylformylglycinamidine synthase subunit PurL (764 aa).

Histidine 57 is an active-site residue. Residues tyrosine 60 and lysine 104 each coordinate ATP. Glutamate 106 contributes to the Mg(2+) binding site. Substrate-binding positions include 107–110 (SHNH) and arginine 129. Histidine 108 functions as the Proton acceptor in the catalytic mechanism. Aspartate 130 contributes to the Mg(2+) binding site. Glutamine 258 contributes to the substrate binding site. Residue aspartate 286 coordinates Mg(2+). 330–332 (ESQ) contributes to the substrate binding site. Residues asparagine 518 and glycine 555 each coordinate ATP. Asparagine 556 lines the Mg(2+) pocket. Serine 558 is a substrate binding site.

Belongs to the FGAMS family. Monomer. Part of the FGAM synthase complex composed of 1 PurL, 1 PurQ and 2 PurS subunits.

It is found in the cytoplasm. The enzyme catalyses N(2)-formyl-N(1)-(5-phospho-beta-D-ribosyl)glycinamide + L-glutamine + ATP + H2O = 2-formamido-N(1)-(5-O-phospho-beta-D-ribosyl)acetamidine + L-glutamate + ADP + phosphate + H(+). It participates in purine metabolism; IMP biosynthesis via de novo pathway; 5-amino-1-(5-phospho-D-ribosyl)imidazole from N(2)-formyl-N(1)-(5-phospho-D-ribosyl)glycinamide: step 1/2. Its function is as follows. Part of the phosphoribosylformylglycinamidine synthase complex involved in the purines biosynthetic pathway. Catalyzes the ATP-dependent conversion of formylglycinamide ribonucleotide (FGAR) and glutamine to yield formylglycinamidine ribonucleotide (FGAM) and glutamate. The FGAM synthase complex is composed of three subunits. PurQ produces an ammonia molecule by converting glutamine to glutamate. PurL transfers the ammonia molecule to FGAR to form FGAM in an ATP-dependent manner. PurS interacts with PurQ and PurL and is thought to assist in the transfer of the ammonia molecule from PurQ to PurL. This chain is Phosphoribosylformylglycinamidine synthase subunit PurL, found in Nocardia farcinica (strain IFM 10152).